The primary structure comprises 416 residues: MSLSSKLTVKDLDVTGKRVFIRVDFNVPLDGKKITSNQRIVAALPTIQYVLEKKPKAIVLASHLGRPNGEVNDKYSLAPVADELSRLLQKPVTFLHDCVGEEVTNAVNNAKDGEVFLLENLRFHIEEEGSRKVDGNKVKADKAAVTKFREQLSSLADVYVNDAFGTAHRAHSSIVGFDLPNRAAGFLLSKELQYFAKALENPTRPFLAILGGAKVADKIQLIDNLLDKVDSLIIGGGMAFTFKKVLENTEIGDSIYDAAGAELVPKLVEKAKKNNVKIVLPTDFVIGDKFSADANTKVVTDKEGIPSGWQGLDNGPESRKAFAATVAEAKTIVWNGPPGVFEFAPFAKGTEALLDAVVASSQAGNTVIIGGGDTATVAKKYGVVDKISHVSTGGGASLELLEGKELPGVTFLSNKQ.

(2R)-3-phosphoglycerate-binding residues include Val-23, Asp-24, Phe-25, Asn-26, Gln-38, Arg-39, Ser-62, His-63, Gly-65, Arg-66, Leu-121, Arg-122, His-168, and Arg-169. Gly-212 is an ADP binding site. A CDP-binding site is contributed by Gly-212. AMP contacts are provided by Ala-213 and Lys-214. Ala-213 is an ATP binding site. Residue Ala-213 participates in Mg(2+) binding. Residues Ala-216 and Asp-217 each contribute to the Mg(2+) site. Asp-217 provides a ligand contact to CDP. Position 218 (Lys-218) interacts with AMP. Position 218 (Lys-218) interacts with ATP. Residue Gly-236 participates in ADP binding. Gly-236 serves as a coordination point for CDP. Gly-237 and Gly-311 together coordinate AMP. ATP is bound by residues Gly-237 and Gly-311. CDP is bound by residues Gly-336 and Phe-341. Residue Phe-341 coordinates ADP. Glu-342 contributes to the AMP binding site. Positions 342, 373, and 374 each coordinate ATP. A Mg(2+)-binding site is contributed by Asp-373.

It belongs to the phosphoglycerate kinase family. Monomer. Mg(2+) serves as cofactor.

It is found in the cytoplasm. The protein resides in the mitochondrion. It carries out the reaction (2R)-3-phosphoglycerate + ATP = (2R)-3-phospho-glyceroyl phosphate + ADP. Its pathway is carbohydrate degradation; glycolysis; pyruvate from D-glyceraldehyde 3-phosphate: step 2/5. Functionally, catalyzes one of the two ATP producing reactions in the glycolytic pathway via the reversible conversion of 1,3-diphosphoglycerate to 3-phosphoglycerate. Both L- and D- forms of purine and pyrimidine nucleotides can be used as substrates, but the activity is much lower on pyrimidines. Negatively regulates the biosynthesis of acetyl-CoA from pyruvate in the mitochondrion. The polypeptide is Phosphoglycerate kinase (PGK) (Kluyveromyces lactis (strain ATCC 8585 / CBS 2359 / DSM 70799 / NBRC 1267 / NRRL Y-1140 / WM37) (Yeast)).